A 152-amino-acid polypeptide reads, in one-letter code: Nucleoside diphosphate kinase (152 aa).

ATP-binding residues include Lys-11, Phe-59, Arg-87, Thr-93, Arg-104, and Asn-114. Catalysis depends on His-117, which acts as the Pros-phosphohistidine intermediate.

Belongs to the NDK family. In terms of assembly, homotetramer. Mg(2+) serves as cofactor.

The protein resides in the cytoplasm. It carries out the reaction a 2'-deoxyribonucleoside 5'-diphosphate + ATP = a 2'-deoxyribonucleoside 5'-triphosphate + ADP. The enzyme catalyses a ribonucleoside 5'-diphosphate + ATP = a ribonucleoside 5'-triphosphate + ADP. Major role in the synthesis of nucleoside triphosphates other than ATP. The ATP gamma phosphate is transferred to the NDP beta phosphate via a ping-pong mechanism, using a phosphorylated active-site intermediate. The sequence is that of Nucleoside diphosphate kinase from Prochlorococcus marinus (strain MIT 9303).